The chain runs to 313 residues: Malate dehydrogenase (313 aa).

Residues 8 to 13 and Asp-33 contribute to the NAD(+) site; that span reads GAGNVG. Residues Arg-83 and Arg-89 each coordinate substrate. NAD(+) is bound by residues Asn-96 and 119–121; that span reads ISN. Asn-121 and Arg-152 together coordinate substrate. His-176 serves as the catalytic Proton acceptor.

This sequence belongs to the LDH/MDH superfamily. MDH type 3 family.

The catalysed reaction is (S)-malate + NAD(+) = oxaloacetate + NADH + H(+). In terms of biological role, catalyzes the reversible oxidation of malate to oxaloacetate. The chain is Malate dehydrogenase from Bacteroides fragilis (strain ATCC 25285 / DSM 2151 / CCUG 4856 / JCM 11019 / LMG 10263 / NCTC 9343 / Onslow / VPI 2553 / EN-2).